Reading from the N-terminus, the 235-residue chain is Small ribosomal subunit protein eS4 (235 aa).

The 62-residue stretch at 38–99 folds into the S4 RNA-binding domain; the sequence is VTLLTIIRDY…GESYRVVYNN (62 aa).

This sequence belongs to the eukaryotic ribosomal protein eS4 family.

The chain is Small ribosomal subunit protein eS4 (rps4e) from Thermoplasma volcanium (strain ATCC 51530 / DSM 4299 / JCM 9571 / NBRC 15438 / GSS1).